An 82-amino-acid polypeptide reads, in one-letter code: Small ribosomal subunit protein uS17 (82 aa).

The protein belongs to the universal ribosomal protein uS17 family. As to quaternary structure, part of the 30S ribosomal subunit.

In terms of biological role, one of the primary rRNA binding proteins, it binds specifically to the 5'-end of 16S ribosomal RNA. The sequence is that of Small ribosomal subunit protein uS17 from Shewanella sediminis (strain HAW-EB3).